We begin with the raw amino-acid sequence, 1047 residues long: Cation efflux system protein CusA (1047 aa).

The next 12 membrane-spanning stretches (helical) occupy residues 14–34 (FLVL…IINT), 338–358 (LSGK…LFLW), 363–383 (ALVA…VMHF), 391–411 (MSLG…IVMI), 446–466 (VGPA…PIFT), 485–505 (AMAG…GYWI), 532–552 (VLHW…TVLW), 871–891 (KLKL…YLAF), 898–918 (LLII…LWWM), 928–948 (TGFI…LMYL), 985–1005 (AMTV…TGAG), and 1012–1032 (IAAP…FIIP).

It belongs to the resistance-nodulation-cell division (RND) (TC 2.A.6) family. In terms of assembly, the cus efflux system is composed of CusA, CusB, CusC and CusF.

Its subcellular location is the cell inner membrane. In terms of biological role, part of a cation efflux system that mediates resistance to copper and silver. This Escherichia coli (strain K12) protein is Cation efflux system protein CusA (cusA).